A 114-amino-acid chain; its full sequence is MPRSVNSVAKRARRKKIMKQAKGFFGRRKNVWTVAKNAVEKAMCYAYRDRKVNKRNFRALWIQRINAGARLEGMSYSQFMGKVKKHNIELNRKVLADLAMNHPVAFKTILNKVK.

The protein belongs to the bacterial ribosomal protein bL20 family.

In terms of biological role, binds directly to 23S ribosomal RNA and is necessary for the in vitro assembly process of the 50S ribosomal subunit. It is not involved in the protein synthesizing functions of that subunit. This Flavobacterium psychrophilum (strain ATCC 49511 / DSM 21280 / CIP 103535 / JIP02/86) protein is Large ribosomal subunit protein bL20.